Reading from the N-terminus, the 492-residue chain is G protein-activated inward rectifier potassium channel 1 (492 aa).

The Cytoplasmic portion of the chain corresponds to 1–72 (MSALRRKLGD…LFTTLVDLKW (72 aa)). Positions 16-35 (STSASGGGLPPPRAAPRGKR) are disordered. Residues 73–97 (RWNLFIFVLTYTVAWLFMASMWWVI) form a helical membrane-spanning segment. The Extracellular segment spans residues 98–121 (AYMRGDLNKAHDDSYTPCVANVYN). Residues 122–133 (FPSAFLFFIETE) constitute an intramembrane region (helical; Pore-forming). The segment at residues 134-140 (ATIGYGY) is an intramembrane region (pore-forming). Positions 135-140 (TIGYGY) match the Selectivity filter motif. At 141–149 (RYITDKCPE) the chain is on the extracellular side. The chain crosses the membrane as a helical span at residues 150-171 (GIILFLFQSILGSIVDAFLIGC). Residues 172 to 492 (MFIKMSQPKK…LRKMNSDRFT (321 aa)) lie on the Cytoplasmic side of the membrane. The interval 174 to 201 (IKMSQPKKRAETLMFSEHAAISMRDGKL) is polyphosphoinositide (PIP2)-binding. Residues 452 to 492 (SDPMSQSVADLPPKLQKLSGGGRMEGNLPPKLRKMNSDRFT) are disordered.

It belongs to the inward rectifier-type potassium channel (TC 1.A.2.1) family. KCNJ3 subfamily. In terms of assembly, associates with KCNJ5/GIRK4 or KCNJ6/GIRK2 or KCNJ9/GIRK3 to form a G-protein activated heteromultimer pore-forming unit. The resulting inward current is much larger.

The protein localises to the membrane. The enzyme catalyses K(+)(in) = K(+)(out). Its activity is regulated as follows. Heteromultimer composed of KCNJ3/GIRK1 and KCNJ5/GIRK4 is activated by phosphatidylinositol 4,5 biphosphate (PtdIns(4,5)P2). Inward rectifier potassium channels are characterized by a greater tendency to allow potassium to flow into the cell rather than out of it. Their voltage dependence is regulated by the concentration of extracellular potassium; as external potassium is raised, the voltage range of the channel opening shifts to more positive voltages. The inward rectification is mainly due to the blockage of outward current by internal magnesium. This potassium channel is controlled by G proteins. This receptor plays a crucial role in regulating the heartbeat. The chain is G protein-activated inward rectifier potassium channel 1 (KCNJ3) from Gallus gallus (Chicken).